The sequence spans 298 residues: MTDNDSEYIRQTEATRVRVLSEALPYIQQFAGRTVVVKYGGAAMKDSTLKDKVIRDIVFLSCVGLRPIVVHGGGPEINSWLDKLGIEPQFKNGLRVTDAATMDVVEMVLVGRVNKEIVALINQAGGLAVGLCGKDGNLFTARPQGQEGIGFVGEVSNVNIKILDTLASNGYIPVVSSVAADETGQAYNINADTVAGEIAAALGAEKLILLTDTSGILKDYKDQSTLIPKVDIREARELIVNGIVTGGMIPKVNCCVRSLAQGVRAAHIIDGRIPHALLLEIFTDVGIGTMILGSQFTS.

Residues 73–74 (GG), Arg95, and Asn188 each bind substrate.

It belongs to the acetylglutamate kinase family. ArgB subfamily.

The protein resides in the cytoplasm. It carries out the reaction N-acetyl-L-glutamate + ATP = N-acetyl-L-glutamyl 5-phosphate + ADP. It participates in amino-acid biosynthesis; L-arginine biosynthesis; N(2)-acetyl-L-ornithine from L-glutamate: step 2/4. Functionally, catalyzes the ATP-dependent phosphorylation of N-acetyl-L-glutamate. In Nostoc punctiforme (strain ATCC 29133 / PCC 73102), this protein is Acetylglutamate kinase.